We begin with the raw amino-acid sequence, 692 residues long: Sodium- and chloride-dependent glycine transporter 1 (692 aa).

Residues 1–34 (MIGGDTRAASAHPGMASAQGPVATPSPEQPFPGT) are disordered. Over 1-94 (MIGGDTRAAS…TRGNWGNQIE (94 aa)) the chain is Cytoplasmic. Transmembrane regions (helical) follow at residues 95–115 (FVLTSVGYAVGLGNVWRFPYL), 122–142 (GAFMFPYFIMLIFCGIPLFFM), and 174–194 (VSTYIGIYYNVVICIAFYYFF). Over 195 to 271 (SSMTHVLPWA…LSDDIGNFGE (77 aa)) the chain is Extracellular. A run of 9 helical transmembrane segments spans residues 272-292 (VRLPLLGCLGVSWVVVFLCLI), 301-321 (VVYFTATFPYVVLTILFVRGV), 346-366 (VWGDAASQIFYSLGCAWGGLI), 393-413 (SVYAGFVIFSILGFMANHLGV), 436-456 (LLPISPLWSLLFFFMLILLGL), 492-512 (VAGFLLGIPLTSQAGIYWLLL), 516-536 (YAASFSLVVISCIMCVSIMYI), 556-576 (LFFQICWRFVSPAIIFFILIF), and 596-616 (VAIGFLMALSSVICIPLYALF). Topologically, residues 617–692 (QLCRTDGDTL…GSSRFQDSRI (76 aa)) are cytoplasmic. T657 is subject to Phosphothreonine. Phosphoserine occurs at positions 659 and 684. The tract at residues 681–692 (SNGSSRFQDSRI) is essential for interaction with EXOC1.

This sequence belongs to the sodium:neurotransmitter symporter (SNF) (TC 2.A.22) family. SLC6A9 subfamily. Interacts with EXOC1; interaction increases the transporter capacity of SLC6A9 probably by promoting its insertion into the cell membrane. Interacts with EXOC3 and EXOC4. In terms of tissue distribution, expressed in the brain (at protein level). At 11 dpc, expressed in the ventral part of the ventricular zone. At 15 dpc, also expressed in adjacent mantle tissue and the meninges. Strongly expressed in 12 dpc and 15 dpc liver. Expressed in the brain.

It is found in the cell membrane. It carries out the reaction glycine(out) + chloride(out) + 2 Na(+)(out) = glycine(in) + chloride(in) + 2 Na(+)(in). Its function is as follows. Sodium- and chloride-dependent glycine transporter which is essential for regulating glycine concentrations at inhibitory glycinergic synapses. Sodium- and chloride-dependent glycine transporter. The chain is Sodium- and chloride-dependent glycine transporter 1 (Slc6a9) from Mus musculus (Mouse).